The primary structure comprises 259 residues: 3'-5' ssDNA/RNA exonuclease TatD (259 aa).

Residues Glu92, His128, and His153 each coordinate a divalent metal cation.

The protein belongs to the metallo-dependent hydrolases superfamily. TatD-type hydrolase family. TatD subfamily. In terms of assembly, monomer. It depends on Mg(2+) as a cofactor.

The protein localises to the cytoplasm. Its function is as follows. 3'-5' exonuclease that prefers single-stranded DNA and RNA. May play a role in the H(2)O(2)-induced DNA damage repair. The polypeptide is 3'-5' ssDNA/RNA exonuclease TatD (Erwinia tasmaniensis (strain DSM 17950 / CFBP 7177 / CIP 109463 / NCPPB 4357 / Et1/99)).